The following is a 323-amino-acid chain: L-lactate dehydrogenase (323 aa).

NAD(+) is bound by residues V18, D39, R44, Y69, and G83 to A84. Positions 86 and 92 each coordinate substrate. NAD(+) is bound by residues T105, A122–N124, and S147. Substrate is bound at residue N124–D127. D152–R155 lines the substrate pocket. Catalysis depends on H179, which acts as the Proton acceptor. Y223 is subject to Phosphotyrosine. T232 lines the substrate pocket.

It belongs to the LDH/MDH superfamily. LDH family. Homotetramer.

The protein resides in the cytoplasm. It carries out the reaction (S)-lactate + NAD(+) = pyruvate + NADH + H(+). The protein operates within fermentation; pyruvate fermentation to lactate; (S)-lactate from pyruvate: step 1/1. Its function is as follows. Catalyzes the conversion of lactate to pyruvate. This is L-lactate dehydrogenase from Pediococcus acidilactici.